Consider the following 326-residue polypeptide: Glutamine synthetase (326 aa).

The GS beta-grasp domain maps to 4 to 85; the sequence is FKLEYIWLDG…VMCEVMMPDG (82 aa). Residues 83 to 326 enclose the GS catalytic domain; that stretch reads PDGHAHASNA…GDPYQIVRRF (244 aa). Mg(2+) is bound by residues Glu-107 and Glu-109. An ATP-binding site is contributed by Glu-164. Mg(2+) is bound by residues Glu-169 and Glu-176. Glu-275 contributes to the L-glutamate binding site.

Belongs to the glutamine synthetase family. As to quaternary structure, homooctamer and homotetramer. Mg(2+) serves as cofactor.

It is found in the cytoplasm. It catalyses the reaction L-glutamate + NH4(+) + ATP = L-glutamine + ADP + phosphate + H(+). Transferase activity is inhibited by NH(4)Cl. Catalyzes the ATP-dependent biosynthesis of glutamine from glutamate and ammonia. The polypeptide is Glutamine synthetase (Rhizobium leguminosarum bv. phaseoli).